Here is a 371-residue protein sequence, read N- to C-terminus: Isopentenyl-diphosphate delta-isomerase (371 aa).

9–10 (RK) is a substrate binding site. FMN is bound by residues T66, 67 to 69 (GMT), S100, and N128. A substrate-binding site is contributed by 100 to 102 (SQR). Q167 is a binding site for substrate. Mg(2+) is bound at residue E168. FMN contacts are provided by residues K199, S224, T229, 278-280 (GMR), and 299-300 (AL).

Belongs to the IPP isomerase type 2 family. In terms of assembly, homooctamer. Dimer of tetramers. Requires FMN as cofactor. NADPH is required as a cofactor. Mg(2+) serves as cofactor.

The protein localises to the cytoplasm. It catalyses the reaction isopentenyl diphosphate = dimethylallyl diphosphate. Functionally, involved in the biosynthesis of isoprenoids. Catalyzes the 1,3-allylic rearrangement of the homoallylic substrate isopentenyl (IPP) to its allylic isomer, dimethylallyl diphosphate (DMAPP). The sequence is that of Isopentenyl-diphosphate delta-isomerase from Pyrococcus horikoshii (strain ATCC 700860 / DSM 12428 / JCM 9974 / NBRC 100139 / OT-3).